The following is a 127-amino-acid chain: Large-conductance mechanosensitive channel (127 aa).

Transmembrane regions (helical) follow at residues Glu-9 to Phe-29, Ile-32 to Val-52, and Val-75 to Leu-95.

It belongs to the MscL family. In terms of assembly, homopentamer.

It localises to the cell inner membrane. Channel that opens in response to stretch forces in the membrane lipid bilayer. May participate in the regulation of osmotic pressure changes within the cell. This chain is Large-conductance mechanosensitive channel, found in Legionella pneumophila (strain Lens).